The primary structure comprises 684 residues: Protein ecdysoneless (684 aa).

A compositionally biased stretch (acidic residues) spans 491–501 (EPELDSDDDEP). Disordered stretches follow at residues 491–528 (EPEL…CQRN) and 603–624 (TSVG…EDDF).

The protein belongs to the ECD family. As to expression, expressed in the ecdysone-producing larval ring gland, nervous system, imaginal disks and gonads.

The protein resides in the cytoplasm. Required in both the follicle cells and the germline for oocyte development. This Drosophila melanogaster (Fruit fly) protein is Protein ecdysoneless.